The primary structure comprises 728 residues: MEEIPALYPTEQEFKNPIDYLSNPHIKRLGVRYGMVKVVPPNGFCPPLSIDMENFTFQPRIQNLENLDLKNRCRLFFMKQLNNFKRSVKDPSKLILREPYTIVEYSDSTHASEILKKKVYFYDVFSELIKDNRTLTDTTQSFRRKLKFRDISQLRGDISLWRTISKKFNVPIGLLKEIFEKYIASYYIFLHSLNENVHTALHADQYPKSLLSDDEDDFDLGPDSNSGSDFEEDDDDACIVCRKTNDPKRTILCDSCDKPFHIYCLSPPLERVPSGDWICNTCIVGNGYYGFTQDTHDYSLPEFQEYCKRQNSRLLPARKLSIDELEEMFWSLVTKNRRSSLTTVKYGADIHNELPGQITGFPTREFIPKNINGDELIDYLKYCDHPMNLTNLPMAHNSLLPLFKRNISGMTIPWIYIGSLFSTFCWHMEDQYTLSANYQHEGDPKVWYSIPESGCTKFNDLLNDMSPDLFIKQPDLLHQLVTLISPYDPNFKKSGIPVYKAVQKPNEYIITFPKCYHAGFNTGYNFNEAVNFTIDFWLPYGFGAITDYKLTQKACVFDMFDLMINVLDKYNKDTLLFNDAFVRQCYSSLIVFYNTELKRIRKIQAIVPRTTLLEVHTDPNDEDEEYDIFCSQCKTICSIAFVLRKNNYDSIRTYKRHKKNHLSIRQWNELSTTDSKVSILCTQDYLKSIQNLNNSDGEEPYIDDELYFTKSLKDIDSLIKQVGVKLDR.

The region spanning 4–47 (IPALYPTEQEFKNPIDYLSNPHIKRLGVRYGMVKVVPPNGFCPP) is the JmjN domain. The PHD-type zinc-finger motif lies at 235 to 285 (DDACIVCRKTNDPKRTILCDSCDKPFHIYCLSPPLERVPSGDWICNTCIVG). Residues 381–549 (KYCDHPMNLT…YGFGAITDYK (169 aa)) form the JmjC domain. Residues His427, Asp430, and His517 each coordinate Fe cation.

It belongs to the JARID1 histone demethylase family. Fe(2+) serves as cofactor.

The protein localises to the nucleus. It carries out the reaction N(6),N(6),N(6)-trimethyl-L-lysyl(4)-[histone H3] + 3 2-oxoglutarate + 3 O2 = L-lysyl(4)-[histone H3] + 3 formaldehyde + 3 succinate + 3 CO2. Histone demethylase that demethylates 'Lys-4' of histone H3, thereby playing a central role in histone code. Demethylates trimethylated H3 'Lys-4'. In Saccharomyces cerevisiae (strain ATCC 204508 / S288c) (Baker's yeast), this protein is Histone demethylase JHD2 (JHD2).